Reading from the N-terminus, the 491-residue chain is 3-octaprenyl-4-hydroxybenzoate carboxy-lyase (491 aa).

Asn176 lines the Mn(2+) pocket. Prenylated FMN-binding positions include Ile179–Arg181, Arg193–Leu195, and Arg198–Gly199. A Mn(2+)-binding site is contributed by Glu242. The active-site Proton donor is the Asp291.

The protein belongs to the UbiD family. Homohexamer. Prenylated FMN is required as a cofactor. The cofactor is Mn(2+).

The protein localises to the cell membrane. The enzyme catalyses a 4-hydroxy-3-(all-trans-polyprenyl)benzoate + H(+) = a 2-(all-trans-polyprenyl)phenol + CO2. The protein operates within cofactor biosynthesis; ubiquinone biosynthesis. In terms of biological role, catalyzes the decarboxylation of 3-octaprenyl-4-hydroxy benzoate to 2-octaprenylphenol, an intermediate step in ubiquinone biosynthesis. This chain is 3-octaprenyl-4-hydroxybenzoate carboxy-lyase, found in Chromobacterium violaceum (strain ATCC 12472 / DSM 30191 / JCM 1249 / CCUG 213 / NBRC 12614 / NCIMB 9131 / NCTC 9757 / MK).